We begin with the raw amino-acid sequence, 372 residues long: MFLTNLTLTNYRNYEHETLSFDQGVNIILGENAQGKTNMMEAIYVLAMAKSHRTTNDKDLIRWNEDYAKIEGRAEKRSGSLALELTISKKGKKARCNHIEQQRLSQYVGHLNVVMFAPEDLNLVKGSPQVRRRFIDMEIGQVSPVYIHDLSQYQKLLQQRNHYLKMMQAREQHDEAVLDVLTEQLMVLAAKITLRRRQFLALLEQWAMPIHHEISRGAERLHIRYEPSVDVSEKAELSRIVEAYSETFAAMREREIQRGTTLVGPHRDDIAFIVNGKNVQTFGSQGQQRTTALAVKLAEIELIFSELGDYPILLLDDVLSELDDFRQTHLLDAIRKKVQTFVTTTSIDGIKHDLIQEAAIYRVHSGSVAAPS.

30–37 (GENAQGKT) contributes to the ATP binding site.

Belongs to the RecF family.

The protein localises to the cytoplasm. In terms of biological role, the RecF protein is involved in DNA metabolism; it is required for DNA replication and normal SOS inducibility. RecF binds preferentially to single-stranded, linear DNA. It also seems to bind ATP. In Geobacillus thermodenitrificans (strain NG80-2), this protein is DNA replication and repair protein RecF.